A 168-amino-acid chain; its full sequence is Protein GRE1 (168 aa).

The interval 1-168 (MSNLLNKFAD…DDDSGNQGVW (168 aa)) is disordered. Composition is skewed to basic and acidic residues over residues 8 to 20 (FADK…HDER) and 27 to 43 (DQTR…REFR). Composition is skewed to polar residues over residues 56–81 (NQGN…GNDF) and 120–144 (TSGQ…SNIG).

It is found in the cytoplasm. In Saccharomyces cerevisiae (strain ATCC 204508 / S288c) (Baker's yeast), this protein is Protein GRE1 (GRE1).